The sequence spans 614 residues: Interleukin-18 receptor accessory protein (614 aa).

The N-terminal stretch at methionine 1–glycine 19 is a signal peptide. Topologically, residues phenylalanine 20–glutamate 356 are extracellular. The N-linked (GlcNAc...) asparagine glycan is linked to asparagine 21. Cysteine 46 and cysteine 126 are disulfide-bonded. A disordered region spans residues alanine 59–lysine 78. Ig-like C2-type domains are found at residues proline 148–arginine 234 and proline 250–arginine 352. A glycan (N-linked (GlcNAc...) asparagine) is linked at asparagine 151. 3 cysteine pairs are disulfide-bonded: cysteine 154–cysteine 179, cysteine 174–cysteine 220, and cysteine 179–cysteine 220. N-linked (GlcNAc...) asparagine glycosylation is present at asparagine 227. Cysteine 272 and cysteine 336 form a disulfide bridge. The N-linked (GlcNAc...) asparagine glycan is linked to asparagine 344. A helical membrane pass occupies residues valine 357–alanine 377. Residues alanine 378–cysteine 614 are Cytoplasmic-facing. Residues lysine 405–methionine 558 form the TIR domain. The active site involves glutamate 492.

The protein belongs to the interleukin-1 receptor family. In terms of assembly, forms a ternary complex with IL18 and IL18R1. Within this complex, IL18R1 is involved in ligand-binding and IL18RAP in signaling leading to NF-kappa-B and JNK activation.

It is found in the cell membrane. The catalysed reaction is NAD(+) + H2O = ADP-D-ribose + nicotinamide + H(+). Within the IL18 receptor complex, does not mediate IL18-binding, but involved in IL18-dependent signal transduction, leading to NF-kappa-B and JNK activation. May play a role in IL18-mediated IFNG synthesis from T-helper 1 (Th1) cells. The protein is Interleukin-18 receptor accessory protein of Mus musculus (Mouse).